Here is a 66-residue protein sequence, read N- to C-terminus: Scarabaecin (66 aa).

The first 26 residues, 1-26 (MKTLTFYTLLLCAALYSNFFDCKAVA), serve as a signal peptide directing secretion. Cysteines 46 and 57 form a disulfide.

It localises to the secreted. Its function is as follows. Possesses antifungal activity against phytopathogenic fungi such as P.oryzae, R.solani and B.cinerea but not against phytopathogenic bacteria. Shows weak activity against the insect pathogenic fungus B.bassiana and against S.aureus. Binds chitin. The polypeptide is Scarabaecin (Oryctes rhinoceros (Coconut rhinoceros beetle)).